A 709-amino-acid polypeptide reads, in one-letter code: Ribosomal RNA large subunit methyltransferase K/L (709 aa).

In terms of domain architecture, THUMP spans 43–154 (LAYRITLWTR…NGVITIAMNF (112 aa)).

Belongs to the methyltransferase superfamily. RlmKL family.

Its subcellular location is the cytoplasm. The catalysed reaction is guanosine(2445) in 23S rRNA + S-adenosyl-L-methionine = N(2)-methylguanosine(2445) in 23S rRNA + S-adenosyl-L-homocysteine + H(+). The enzyme catalyses guanosine(2069) in 23S rRNA + S-adenosyl-L-methionine = N(2)-methylguanosine(2069) in 23S rRNA + S-adenosyl-L-homocysteine + H(+). Functionally, specifically methylates the guanine in position 2445 (m2G2445) and the guanine in position 2069 (m7G2069) of 23S rRNA. The chain is Ribosomal RNA large subunit methyltransferase K/L from Shewanella sp. (strain W3-18-1).